The following is a 346-amino-acid chain: HLA class I histocompatibility antigen, alpha chain F (346 aa).

The first 21 residues, 1–21 (MAPRSLLLLLSGALALTDTWA), serve as a signal peptide directing secretion. Positions 22 to 111 (GSHSLRYFST…LLRRYNQSEA (90 aa)) are alpha-1. Topologically, residues 22-305 (GSHSLRYFST…EQSPQPTIPI (284 aa)) are extracellular. A peptide antigen is bound by residues asparagine 91 and arginine 105. Asparagine 107 carries an N-linked (GlcNAc...) asparagine glycan. The interval 112 to 203 (GSHTLQGMNG…ENGKETLQRA (92 aa)) is alpha-2. 2 disulfide bridges follow: cysteine 122/cysteine 185 and cysteine 224/cysteine 280. Residues threonine 164, tyrosine 168, and glutamate 176 each contribute to the a peptide antigen site. The interval 204-295 (DPPKAHVAHH…GLPQPLILRW (92 aa)) is alpha-3. The Ig-like C1-type domain occupies 206–296 (PKAHVAHHPI…LPQPLILRWE (91 aa)). The tract at residues 296–305 (EQSPQPTIPI) is connecting peptide. Residues 306–329 (VGIVAGLVVLGAVVTGAVVAAVMW) traverse the membrane as a helical segment. At 330 to 346 (RKKSSDRNRGSYSQAAV) the chain is on the cytoplasmic side. The Sorting signal sequence; Golgi-retention signal; ER-retention signal signature appears at 336–338 (RNR).

This sequence belongs to the MHC class I family. Forms a heterotrimer with B2M and a self-peptide. Binds a diverse number of peptides ranging from 7 to more than 30 amino acids. Peptide-bound HLA-F-B2M interacts with LILRB1 and LILRB2 but not with KIR3DS1 or KIR3DL2; this interaction is direct. The OC form interacts with KIR3DS1, KIR2DS4 and KIR3DL2; this interaction is direct. Interacts with TAP1-TAP2 complex and CALR; this interaction is required for appropriate folding and peptide loading. Interacts with the coat protein complex II and 14-3-3 proteins; these interactions likely control the anterograde ER-to-Golgi transport of HLA-F. HLA-F-B2M complex interacts with the heavy chain of other MHC class I molecules including HLA-A and HLA-E; this interaction may regulate the intracellular trafficking and the stability of peptide-free MHC class I OCs. Post-translationally, N-glycosylated. In terms of tissue distribution, expressed in resting B cells (at protein level). Expressed in secondary lymphoid organs rich in B and T cells such as the tonsils, spleen, and thymus (at protein level). Expressed in the endothelial cells of the tonsils. Expressed on activated lymphoid cells including B cells, NK cells, CD4+ T cells and memory T cells (at protein level). Expressed in motor neurons of spinal cord.

Its subcellular location is the cell membrane. The protein resides in the early endosome membrane. It localises to the lysosome membrane. Non-classical major histocompatibility class Ib molecule postulated to play a role in immune surveillance, immune tolerance and inflammation. Functions in two forms, as a heterotrimeric complex with B2M/beta-2 microglobulin and a peptide (peptide-bound HLA-F-B2M) and as an open conformer (OC) devoid of peptide and B2M (peptide-free OC). In complex with B2M, presents non-canonical self-peptides carrying post-translational modifications, particularly phosphorylated self-peptides. Peptide-bound HLA-F-B2M acts as a ligand for LILRB1 inhibitory receptor, a major player in maternal-fetal tolerance. Peptide-free OC acts as a ligand for KIR3DS1 and KIR3DL2 receptors. Upon interaction with activating KIR3DS1 receptor on NK cells, triggers NK cell degranulation and anti-viral cytokine production. Through interaction with KIR3DL2 receptor, inhibits NK and T cell effector functions. May interact with other MHC class I OCs to cross-present exogenous viral, tumor or minor histompatibility antigens to cytotoxic CD8+ T cells, triggering effector and memory responses. May play a role in inflammatory responses in the peripheral nervous system. Through interaction with KIR3DL2, may protect motor neurons from astrocyte-induced toxicity. This chain is HLA class I histocompatibility antigen, alpha chain F, found in Homo sapiens (Human).